A 158-amino-acid polypeptide reads, in one-letter code: Flagellar assembly factor FliW (158 aa).

This sequence belongs to the FliW family. As to quaternary structure, interacts with translational regulator CsrA and flagellin(s).

It localises to the cytoplasm. Functionally, acts as an anti-CsrA protein, binds CsrA and prevents it from repressing translation of its target genes, one of which is flagellin. Binds to flagellin and participates in the assembly of the flagellum. The sequence is that of Flagellar assembly factor FliW from Syntrophus aciditrophicus (strain SB).